Here is a 796-residue protein sequence, read N- to C-terminus: Polyribonucleotide nucleotidyltransferase (796 aa).

Asp490 and Asp496 together coordinate Mg(2+). Residues 557–616 (PRIESIFINKDKIRNVIGSGGKNIRDICEKTGAKIEIIQDGTVMIYAVNNEAVEYAKSMI) form the KH domain. In terms of domain architecture, S1 motif spans 626 to 693 (GKVFEGTVVE…DREHVQLSMR (68 aa)). The span at 714-736 (SFSDDSSSSGTSSSGSSFKESYS) shows a compositional bias: low complexity. Residues 714-796 (SFSDDSSSSG…HEVPRKPRFF (83 aa)) form a disordered region. Residues 740–755 (HGSHEKRRSGGSRSSR) are compositionally biased toward basic residues. The segment covering 771–784 (SDFGNNNRSFSNSR) has biased composition (low complexity). The segment covering 785 to 796 (NGHEVPRKPRFF) has biased composition (basic and acidic residues).

The protein belongs to the polyribonucleotide nucleotidyltransferase family. Mg(2+) serves as cofactor.

The protein localises to the cytoplasm. It catalyses the reaction RNA(n+1) + phosphate = RNA(n) + a ribonucleoside 5'-diphosphate. Involved in mRNA degradation. Catalyzes the phosphorolysis of single-stranded polyribonucleotides processively in the 3'- to 5'-direction. The chain is Polyribonucleotide nucleotidyltransferase from Ehrlichia canis (strain Jake).